The primary structure comprises 375 residues: Probable pectin lyase D (375 aa).

The signal sequence occupies residues 1 to 19 (MKYAAVLTTVAALASRALG). 2 disulfides stabilise this stretch: Cys82–Cys101 and Cys91–Cys225. The N-linked (GlcNAc...) asparagine glycan is linked to Asn128. Arg255 is an active-site residue. Residues Cys321 and Cys329 are joined by a disulfide bond.

This sequence belongs to the polysaccharide lyase 1 family.

Its subcellular location is the secreted. It catalyses the reaction Eliminative cleavage of (1-&gt;4)-alpha-D-galacturonan methyl ester to give oligosaccharides with 4-deoxy-6-O-methyl-alpha-D-galact-4-enuronosyl groups at their non-reducing ends.. Its function is as follows. Pectinolytic enzymes consist of four classes of enzymes: pectin lyase, polygalacturonase, pectin methylesterase and rhamnogalacturonase. Among pectinolytic enzymes, pectin lyase is the most important in depolymerization of pectin, since it cleaves internal glycosidic bonds of highly methylated pectins. This chain is Probable pectin lyase D (pelD), found in Aspergillus flavus (strain ATCC 200026 / FGSC A1120 / IAM 13836 / NRRL 3357 / JCM 12722 / SRRC 167).